Reading from the N-terminus, the 804-residue chain is MDSSTKTLTEDKQVYRVEGFSCANCAGKFEKNVKELSGVHDAKVNFGASKIDVFGSATVEDLEKAGAFENLKVAPEKARRRVEPVVTEDKNVYRVEGFSCANCAGKFEKNVKQLAGVQDAKVNFGASKIDVYGNASVEELEKAGAFENLKVIPEKLANPSIQAVKEDTKAPKEEKIPFYKKHSTLLFATLLIAFGYLSHFVNGEDNLVTSMLFVSSIVIGGYSLFKVGFQNLIRFDFDMKTLMTVAVIGAAIIGEWAEASIVVILFAISEALERFSMDRARQSIRSLMDIAPKEALVRRNGQEIMIHVDDIAVGDIMIVKPGEKIAMDGIIINGVSAVNQAAITGESVPVAKTVDDEVFAGTLNEEGLLEVKITKYVEDTTISKIIHLVEEAQGERAPAQAFVDKFAKYYTPIIMVIAALVAVVPPLFFGGSWDTWVYQGLAVLVVGCPCALVITTPISIVSAIGNAAKKGVLIKGGVYLEELGAIKAIAFDKTGTLTKGVPVVTDFKVLNDQVEEKELFSIITALEYRSQHPLASAIMKKAEQDNITYSDVRVKDFTSITGRGIQGNIDGTTYYIGSPRLFKELNVSDFSLEFENKVKVLQNQGKTAMIIGTDQTILGVIAVADEVRETSKNVILKLHQLGIKQTIMLTGDNQGTAEAIGAHVGVSDIQSELLPQDKLDYIKKMKAEHGNVAMIGDGVNDAPALAASTVGIAMGGAGTDTAIETADIALMGDDLSKLPFAVRLSRKTLNIIKANITFAIGIKIIALLLVIPGWLTLWIAILSDMGATILVALNSLRLMRVKDK.

2 consecutive HMA domains span residues 11–74 (DKQV…LKVA) and 89–152 (DKNV…LKVI). Cd(2+)-binding residues include Cys-22, Cys-25, Cys-100, and Cys-103. 5 consecutive transmembrane segments (helical) span residues 183-203 (STLLFATLLIAFGYLSHFVNG), 207-227 (LVTSMLFVSSIVIGGYSLFKV), 248-268 (IGAAIIGEWAEASIVVILFAI), 413-433 (IIMVIAALVAVVPPLFFGGSW), and 441-461 (LAVLVVGCPCALVITTPISIV). Asp-492 functions as the 4-aspartylphosphate intermediate in the catalytic mechanism. A run of 2 helical transmembrane segments spans residues 749–771 (LNIIKANITFAIGIKIIALLLVI) and 776–798 (TLWIAILSDMGATILVALNSLRL).

Belongs to the cation transport ATPase (P-type) (TC 3.A.3) family. Type IB subfamily.

The protein localises to the cell membrane. It carries out the reaction Cd(2+)(in) + ATP + H2O = Cd(2+)(out) + ADP + phosphate + H(+). In terms of biological role, couples the hydrolysis of ATP with the export of cadmium. Involved in cadmium resistance. The polypeptide is Probable cadmium-transporting ATPase (cadA) (Staphylococcus aureus).